The primary structure comprises 365 residues: Anhydro-N-acetylmuramic acid kinase (365 aa).

An ATP-binding site is contributed by 9–16 (GTSLDGVD).

The protein belongs to the anhydro-N-acetylmuramic acid kinase family.

The enzyme catalyses 1,6-anhydro-N-acetyl-beta-muramate + ATP + H2O = N-acetyl-D-muramate 6-phosphate + ADP + H(+). It functions in the pathway amino-sugar metabolism; 1,6-anhydro-N-acetylmuramate degradation. It participates in cell wall biogenesis; peptidoglycan recycling. Functionally, catalyzes the specific phosphorylation of 1,6-anhydro-N-acetylmuramic acid (anhMurNAc) with the simultaneous cleavage of the 1,6-anhydro ring, generating MurNAc-6-P. Is required for the utilization of anhMurNAc either imported from the medium or derived from its own cell wall murein, and thus plays a role in cell wall recycling. The chain is Anhydro-N-acetylmuramic acid kinase from Rhodopseudomonas palustris (strain BisB18).